Reading from the N-terminus, the 497-residue chain is Sperm motility kinase Z (497 aa).

Residues 28–275 (YTVLKTLSQH…AQDLLSHPWL (248 aa)) form the Protein kinase domain. Residues 34–42 (LSQHGTTEV) and K57 each bind ATP. Catalysis depends on D146, which acts as the Proton acceptor. In terms of domain architecture, UBA spans 292 to 332 (FPDPDIMAAMKNIGFHVQDIRESLKHRKFDETMATYNLLRA). Disordered stretches follow at residues 383-410 (TEEHQLRQTGGTNAPFPPKKTPTMGRSQ) and 439-460 (SSQAEKTSSDPEKSETSTSCPL).

The protein belongs to the protein kinase superfamily. CAMK Ser/Thr protein kinase family. Smok subfamily.

It carries out the reaction L-seryl-[protein] + ATP = O-phospho-L-seryl-[protein] + ADP + H(+). It catalyses the reaction L-threonyl-[protein] + ATP = O-phospho-L-threonyl-[protein] + ADP + H(+). Functionally, may play a role in sperm motility, especially in the regulation of flagellar function. The chain is Sperm motility kinase Z (Gm4922) from Mus musculus (Mouse).